A 131-amino-acid polypeptide reads, in one-letter code: S-adenosylmethionine decarboxylase proenzyme (131 aa).

Residue serine 64 is the Schiff-base intermediate with substrate; via pyruvic acid of the active site. Serine 64 carries the post-translational modification Pyruvic acid (Ser); by autocatalysis. Histidine 69 (proton acceptor; for processing activity) is an active-site residue. The Proton donor; for catalytic activity role is filled by cysteine 84.

Belongs to the prokaryotic AdoMetDC family. Type 1 subfamily. As to quaternary structure, heterotetramer of two alpha and two beta chains arranged as a dimer of alpha/beta heterodimers. It depends on pyruvate as a cofactor. Is synthesized initially as an inactive proenzyme. Formation of the active enzyme involves a self-maturation process in which the active site pyruvoyl group is generated from an internal serine residue via an autocatalytic post-translational modification. Two non-identical subunits are generated from the proenzyme in this reaction, and the pyruvate is formed at the N-terminus of the alpha chain, which is derived from the carboxyl end of the proenzyme. The post-translation cleavage follows an unusual pathway, termed non-hydrolytic serinolysis, in which the side chain hydroxyl group of the serine supplies its oxygen atom to form the C-terminus of the beta chain, while the remainder of the serine residue undergoes an oxidative deamination to produce ammonia and the pyruvoyl group blocking the N-terminus of the alpha chain.

It catalyses the reaction S-adenosyl-L-methionine + H(+) = S-adenosyl 3-(methylsulfanyl)propylamine + CO2. Its pathway is amine and polyamine biosynthesis; S-adenosylmethioninamine biosynthesis; S-adenosylmethioninamine from S-adenosyl-L-methionine: step 1/1. In terms of biological role, catalyzes the decarboxylation of S-adenosylmethionine to S-adenosylmethioninamine (dcAdoMet), the propylamine donor required for the synthesis of the polyamines spermine and spermidine from the diamine putrescine. The chain is S-adenosylmethionine decarboxylase proenzyme from Thermoplasma acidophilum (strain ATCC 25905 / DSM 1728 / JCM 9062 / NBRC 15155 / AMRC-C165).